A 907-amino-acid polypeptide reads, in one-letter code: Coatomer subunit beta'-1 (907 aa).

WD repeat units follow at residues 13-52 (QRSE…MVKS), 55-94 (VSEL…KVKV), 97-136 (AHTD…MCTQ), 140-180 (GHSH…PNFT), 183-224 (GHQK…CVQT), 227-266 (GHTH…LENT), 269-309 (YGLE…ASMD), 351-389 (SCDL…NRSF), and 461-501 (RIDV…SYLE). Acidic residues-rich tracts occupy residues 850–866 (ETED…EEVL) and 874–887 (STDE…DEPE). The interval 850–887 (ETEDALDENGEPDEEVLEENKVEESTDEAVEVDADEPE) is disordered.

It belongs to the WD repeat COPB2 family. Oligomeric complex that consists of at least the alpha, beta, beta', gamma, delta, epsilon and zeta subunits.

Its subcellular location is the cytoplasm. It localises to the golgi apparatus membrane. It is found in the cytoplasmic vesicle. The protein localises to the COPI-coated vesicle membrane. In terms of biological role, the coatomer is a cytosolic protein complex that binds to dilysine motifs and reversibly associates with Golgi non-clathrin-coated vesicles, which further mediate biosynthetic protein transport from the ER, via the Golgi up to the trans Golgi network. Coatomer complex is required for budding from Golgi membranes, and is essential for the retrograde Golgi-to-ER transport of dilysine-tagged proteins. This Oryza sativa subsp. japonica (Rice) protein is Coatomer subunit beta'-1.